Consider the following 470-residue polypeptide: Aminodeoxychorismate synthase component 1 (470 aa).

Belongs to the anthranilate synthase component I family. As to quaternary structure, monomer. Heterodimer consisting of two non-identical subunits: a glutamine amidotransferase subunit (PabA) and a aminodeoxychorismate synthase subunit (PabB). Mg(2+) is required as a cofactor.

It carries out the reaction chorismate + L-glutamine = 4-amino-4-deoxychorismate + L-glutamate. It functions in the pathway cofactor biosynthesis; tetrahydrofolate biosynthesis; 4-aminobenzoate from chorismate: step 1/2. Functionally, part of a heterodimeric complex that catalyzes the two-step biosynthesis of 4-amino-4-deoxychorismate (ADC), a precursor of p-aminobenzoate (PABA) and tetrahydrofolate. In the first step, a glutamine amidotransferase (PabA) generates ammonia as a substrate that, along with chorismate, is used in the second step, catalyzed by aminodeoxychorismate synthase (PabB) to produce ADC. The polypeptide is Aminodeoxychorismate synthase component 1 (pabB) (Lactococcus lactis subsp. lactis (Streptococcus lactis)).